Here is a 637-residue protein sequence, read N- to C-terminus: Formate--tetrahydrofolate ligase (637 aa).

81–88 (TPLGEGKS) contributes to the ATP binding site.

This sequence belongs to the formate--tetrahydrofolate ligase family. As to quaternary structure, homodimer.

The enzyme catalyses (6S)-5,6,7,8-tetrahydrofolate + formate + ATP = (6R)-10-formyltetrahydrofolate + ADP + phosphate. Its pathway is one-carbon metabolism; tetrahydrofolate interconversion. This Spinacia oleracea (Spinach) protein is Formate--tetrahydrofolate ligase.